Here is a 155-residue protein sequence, read N- to C-terminus: Small ribosomal subunit protein uS7cz/uS7cy (155 aa).

This sequence belongs to the universal ribosomal protein uS7 family. As to quaternary structure, part of the 30S ribosomal subunit.

The protein resides in the plastid. Its subcellular location is the chloroplast. Its function is as follows. One of the primary rRNA binding proteins, it binds directly to 16S rRNA where it nucleates assembly of the head domain of the 30S subunit. The polypeptide is Small ribosomal subunit protein uS7cz/uS7cy (rps7-A) (Ipomoea purpurea (Common morning glory)).